We begin with the raw amino-acid sequence, 109 residues long: Large ribosomal subunit protein uL24 (109 aa).

Belongs to the universal ribosomal protein uL24 family. Part of the 50S ribosomal subunit.

Its function is as follows. One of two assembly initiator proteins, it binds directly to the 5'-end of the 23S rRNA, where it nucleates assembly of the 50S subunit. One of the proteins that surrounds the polypeptide exit tunnel on the outside of the subunit. This Ehrlichia canis (strain Jake) protein is Large ribosomal subunit protein uL24.